The chain runs to 181 residues: Acireductone dioxygenase (181 aa).

4 residues coordinate Fe(2+): H97, H99, E103, and H141. Residues H97, H99, E103, and H141 each contribute to the Ni(2+) site.

The protein belongs to the acireductone dioxygenase (ARD) family. In terms of assembly, monomer. It depends on Fe(2+) as a cofactor. Ni(2+) serves as cofactor.

The enzyme catalyses 1,2-dihydroxy-5-(methylsulfanyl)pent-1-en-3-one + O2 = 3-(methylsulfanyl)propanoate + CO + formate + 2 H(+). It catalyses the reaction 1,2-dihydroxy-5-(methylsulfanyl)pent-1-en-3-one + O2 = 4-methylsulfanyl-2-oxobutanoate + formate + 2 H(+). It participates in amino-acid biosynthesis; L-methionine biosynthesis via salvage pathway; L-methionine from S-methyl-5-thio-alpha-D-ribose 1-phosphate: step 5/6. Functionally, catalyzes 2 different reactions between oxygen and the acireductone 1,2-dihydroxy-3-keto-5-methylthiopentene (DHK-MTPene) depending upon the metal bound in the active site. Fe-containing acireductone dioxygenase (Fe-ARD) produces formate and 2-keto-4-methylthiobutyrate (KMTB), the alpha-ketoacid precursor of methionine in the methionine recycle pathway. Ni-containing acireductone dioxygenase (Ni-ARD) produces methylthiopropionate, carbon monoxide and formate, and does not lie on the methionine recycle pathway. This is Acireductone dioxygenase from Pseudomonas aeruginosa (strain UCBPP-PA14).